Here is a 366-residue protein sequence, read N- to C-terminus: Beta sliding clamp (366 aa).

The segment at 1–125 (MKFTVEREHL…FPNLDDWQSE (125 aa)) is i. Residues 126-253 (VEFTLPQATM…YRRVLPKNPD (128 aa)) are II. The segment at 254-366 (KHLEAGCDLL…AAYVVMPMRL (113 aa)) is III.

The protein belongs to the beta sliding clamp family. In terms of assembly, forms a ring-shaped head-to-tail homodimer around DNA which binds and tethers DNA polymerases and other proteins to the DNA. The DNA replisome complex has a single clamp-loading complex (3 tau and 1 each of delta, delta', psi and chi subunits) which binds 3 Pol III cores (1 core on the leading strand and 2 on the lagging strand) each with a beta sliding clamp dimer. Additional proteins in the replisome are other copies of gamma, psi and chi, Ssb, DNA helicase and RNA primase.

It localises to the cytoplasm. Its function is as follows. Confers DNA tethering and processivity to DNA polymerases and other proteins. Acts as a clamp, forming a ring around DNA (a reaction catalyzed by the clamp-loading complex) which diffuses in an ATP-independent manner freely and bidirectionally along dsDNA. Initially characterized for its ability to contact the catalytic subunit of DNA polymerase III (Pol III), a complex, multichain enzyme responsible for most of the replicative synthesis in bacteria; Pol III exhibits 3'-5' exonuclease proofreading activity. The beta chain is required for initiation of replication as well as for processivity of DNA replication. The protein is Beta sliding clamp (dnaN) of Escherichia coli O157:H7.